Reading from the N-terminus, the 431-residue chain is Histidine--tRNA ligase (431 aa).

The protein belongs to the class-II aminoacyl-tRNA synthetase family.

Its subcellular location is the cytoplasm. The catalysed reaction is tRNA(His) + L-histidine + ATP = L-histidyl-tRNA(His) + AMP + diphosphate + H(+). The chain is Histidine--tRNA ligase (hisS) from Pyrococcus horikoshii (strain ATCC 700860 / DSM 12428 / JCM 9974 / NBRC 100139 / OT-3).